The primary structure comprises 379 residues: MPMRIERDLHMATGNGETSYTKNSRIQEKVMFQIKPVLEEATRAAYSALLPQTMVVADLGCSSGPNTLRFVSEVIGIIARHCKEHDRRHDYPQLQFFLNDLPGNDFNNLFLLIQQFNKSMARNHKGEAAEALPPCYISGLPGSFYTRIFPSESVHLFHSLFSVHWHSQASEQLKDTKNKCLDIYITKNMPPSMVKLFQQQFEKDFSLFLKLRYEELVSGGQMVLTFIGRKHEDVFTGESNHLYGLLAQSLKSLVDEGLVEKEKLESFYLPIYSPSVGEVEAIVKQVGLFNMNHVKVFEINWDPYGDSEGDDVHDSIRSGENVAKCLRAVMEPLVASQFGEHILDKLFKEYARRVAKHLENEKTKHAILVLSIEKAIIHV.

Over residues 1 to 10 (MPMRIERDLH) the composition is skewed to basic and acidic residues. Residues 1–21 (MPMRIERDLHMATGNGETSYT) are disordered. Tyrosine 20 contacts S-adenosyl-L-homocysteine. Position 27 (glutamine 27) interacts with anthranilate. Residues cysteine 61, asparagine 66, aspartate 100, leucine 101, serine 143, and phenylalanine 144 each contribute to the S-adenosyl-L-homocysteine site. Positions 164 and 165 each coordinate anthranilate. Residues glutamate 265 and phenylalanine 267 each coordinate Mg(2+).

It belongs to the methyltransferase superfamily. Type-7 methyltransferase family. SABATH subfamily.

It catalyses the reaction anthranilate + S-adenosyl-L-methionine = O-methyl anthranilate + S-adenosyl-L-homocysteine. The catalysed reaction is benzoate + S-adenosyl-L-methionine = methyl benzoate + S-adenosyl-L-homocysteine. The enzyme catalyses salicylate + S-adenosyl-L-methionine = methyl salicylate + S-adenosyl-L-homocysteine. Methyltransferase involved in the biosynthesis of methyl anthranilate in response to stresses. Utilizes anthranilic acid as substrate. Produces exclusively the O-methyl ester. Can also use benzoic acid as substrate. Low activity with salicylic acid. The sequence is that of Anthranilate O-methyltransferase 3 (AAMT3) from Zea mays (Maize).